The following is a 35-amino-acid chain: Photosystem II reaction center protein Psb30 (35 aa).

The chain crosses the membrane as a helical span at residues 6–26; sequence VIVQLVFLALIITTGPVIIVY.

Belongs to the Psb30/Ycf12 family. In terms of assembly, PSII is composed of 1 copy each of membrane proteins PsbA, PsbB, PsbC, PsbD, PsbE, PsbF, PsbH, PsbI, PsbJ, PsbK, PsbL, PsbM, PsbT, PsbY, PsbZ, Psb30/Ycf12, peripheral proteins of the oxygen-evolving complex and a large number of cofactors. It forms dimeric complexes.

The protein resides in the plastid. The protein localises to the chloroplast thylakoid membrane. In terms of biological role, a core subunit of photosystem II (PSII), probably helps stabilize the reaction center. The polypeptide is Photosystem II reaction center protein Psb30 (Cyanidium caldarium (Red alga)).